A 401-amino-acid polypeptide reads, in one-letter code: O-antigen ligase (401 aa).

Topologically, residues 1-20 (MFAATRLSRLRHDTSRILSH) are cytoplasmic. Residues 21-37 (WILPLGWLALLTGMFWV) form a helical membrane-spanning segment. Residues 38 to 42 (GDRSD) are Periplasmic-facing. A helical transmembrane segment spans residues 43-61 (YHRLFYILLAAPTLLYVIL). Residues 62–72 (QPRLLRPLTGS) are Cytoplasmic-facing. The chain crosses the membrane as a helical span at residues 73–92 (PLFIAFLAFSSYMMLSLSWS). At 93–103 (TPENSTGSLLK) the chain is on the periplasmic side. The helical transmembrane segment at 104–122 (RPLYIALLFFCAAILALEA) threads the bilayer. Residues 123-129 (PLRLKTA) lie on the Cytoplasmic side of the membrane. A helical transmembrane segment spans residues 130-150 (TWLAALGAVISAAATLLRYYW). Topologically, residues 151-161 (DANPLRLTGYG) are periplasmic. The chain crosses the membrane as a helical span at residues 162–183 (ALYNPLLSAHVYGAFTALWLAY). Residues 184–189 (WMQSRP) lie on the Cytoplasmic side of the membrane. The chain crosses the membrane as a helical span at residues 190 to 208 (ILAPLPLISLALLGGLLIA). Over 209–212 (TGSR) the chain is Periplasmic. A helical membrane pass occupies residues 213-229 (TPLVGLTAALMWLVLAG). The Cytoplasmic segment spans residues 230 to 234 (DRKKA). The chain crosses the membrane as a helical span at residues 235 to 252 (LIALALALAGALLGYILY). Topologically, residues 253-306 (PEVITQRGASFRPEIWADALRQISEHPWLGHGYDHPMRIVLSNGMLLADPHNIE) are periplasmic. The WZY-C stretch occupies residues 258 to 319 (QRGASFRPEI…LFAGGIIGLL (62 aa)). A helical transmembrane segment spans residues 307 to 331 (LGVLFAGGIIGLLLWVAIYALAFGF). Residues 332-339 (SWKNRKSP) lie on the Cytoplasmic side of the membrane. Residues 340 to 357 (AVLLASTWLVFGLAAGLT) form a helical membrane-spanning segment. The Periplasmic segment spans residues 358–368 (EGNAFLPRPKE). A helical membrane pass occupies residues 369–385 (HWFLIWIPMALLYALWI). Residues 386–401 (QQRFAASRRGEDIAAP) lie on the Cytoplasmic side of the membrane.

The protein belongs to the O-antigen ligase family. Homodimer.

The protein localises to the cell inner membrane. The enzyme catalyses a lipid-linked O antigen + a lipid A-core oligosaccharide = a lipopolysaccharide + a polyisoprenyl diphosphate.. The protein operates within bacterial outer membrane biogenesis; lipopolysaccharide biosynthesis. With respect to regulation, activity does not require ATP and magnesium ions. Its function is as follows. Transferase involved in the biosynthesis of the lipopolysaccharide (LPS). Catalyzes the transfer of a polymerized O-antigen molecule from its polyprenyl diphosphate membrane anchor to a terminal sugar of the lipid A-core oligosaccharide, finalizing the biosynthesis of the lipopolysaccharide. Required for the attachment of both A-band and B-band O-antigens, two forms of O-antigen produced by P.aeruginosa, onto the lipid A-core receptors. Important for cell wall integrity and motility of the bacteria. The chain is O-antigen ligase from Pseudomonas aeruginosa (strain ATCC 15692 / DSM 22644 / CIP 104116 / JCM 14847 / LMG 12228 / 1C / PRS 101 / PAO1).